The sequence spans 332 residues: tRNA-dihydrouridine(20/20a) synthase (332 aa).

FMN contacts are provided by residues 20–22 (PMM) and Q73. C103 serves as the catalytic Proton donor. FMN is bound by residues K142, H174, 214-216 (NGG), and 236-237 (GR).

The protein belongs to the Dus family. DusA subfamily. FMN is required as a cofactor.

The catalysed reaction is 5,6-dihydrouridine(20) in tRNA + NADP(+) = uridine(20) in tRNA + NADPH + H(+). It catalyses the reaction 5,6-dihydrouridine(20) in tRNA + NAD(+) = uridine(20) in tRNA + NADH + H(+). The enzyme catalyses 5,6-dihydrouridine(20a) in tRNA + NADP(+) = uridine(20a) in tRNA + NADPH + H(+). It carries out the reaction 5,6-dihydrouridine(20a) in tRNA + NAD(+) = uridine(20a) in tRNA + NADH + H(+). Catalyzes the synthesis of 5,6-dihydrouridine (D), a modified base found in the D-loop of most tRNAs, via the reduction of the C5-C6 double bond in target uridines. Specifically modifies U20 and U20a in tRNAs. The protein is tRNA-dihydrouridine(20/20a) synthase of Pseudomonas aeruginosa (strain ATCC 15692 / DSM 22644 / CIP 104116 / JCM 14847 / LMG 12228 / 1C / PRS 101 / PAO1).